The primary structure comprises 298 residues: FH protein interacting protein FIP2 (298 aa).

The BTB domain maps to 9–80 (SMVRLNIGGK…LRDGVIPSLS (72 aa)). 4 consecutive Pentapeptide repeat domains span residues 129-165 (ERVR…FFSR), 166-203 (TNLQ…GALL), 216-255 (ACLV…NLKG), and 256-295 (AKLS…NMTG).

As to quaternary structure, interacts with FH1. As to expression, expressed in all tissues but preferentially in roots and flowers.

It participates in protein modification; protein ubiquitination. Its function is as follows. May act as a substrate-specific adapter of an E3 ubiquitin-protein ligase complex (CUL3-RBX1-BTB) which mediates the ubiquitination and subsequent proteasomal degradation of target proteins. In Arabidopsis thaliana (Mouse-ear cress), this protein is FH protein interacting protein FIP2 (FIP2).